We begin with the raw amino-acid sequence, 227 residues long: ATP-dependent dethiobiotin synthetase BioD (227 aa).

Residue aspartate 13 to valine 18 participates in ATP binding. Threonine 17 contributes to the Mg(2+) binding site. Lysine 38 is a catalytic residue. Residues aspartate 55, glutamate 116 to glycine 119, asparagine 176 to arginine 177, and proline 205 to isoleucine 207 each bind ATP. Mg(2+) is bound by residues aspartate 55 and glutamate 116.

It belongs to the dethiobiotin synthetase family. Homodimer. It depends on Mg(2+) as a cofactor.

It is found in the cytoplasm. It carries out the reaction (7R,8S)-7,8-diammoniononanoate + CO2 + ATP = (4R,5S)-dethiobiotin + ADP + phosphate + 3 H(+). Its pathway is cofactor biosynthesis; biotin biosynthesis; biotin from 7,8-diaminononanoate: step 1/2. In terms of biological role, catalyzes a mechanistically unusual reaction, the ATP-dependent insertion of CO2 between the N7 and N8 nitrogen atoms of 7,8-diaminopelargonic acid (DAPA, also called 7,8-diammoniononanoate) to form a ureido ring. The protein is ATP-dependent dethiobiotin synthetase BioD of Vibrio campbellii (strain ATCC BAA-1116).